A 302-amino-acid chain; its full sequence is MLKKLKVVRLLVNHLIYCPSIFMPYSKNMKKKIWNKTSLGALFMLFGTALTACSNSGFEANLTSLNQLRTSASKNTNLTQNKADLVTALKSAFENNPEGTTRVLLDAWKFTLLDAQILEKQDFSKFSKSFGSGRSIEDVEPSAGVRGLRLVERYTQDTANIINNVIKLDKQKVEAFSIQYKDPKNFRVQVKINAKGNYKKDTVKTYLSQVGLSDGDLNDTGTLEAEIIYTYMPPAASFFSASKFDKLTRAINFNTNLRIQIIGKDSVMTKLLQQSSFVKQLADQKFQDQSINLLPYVLYSIL.

Positions 1–52 are cleaved as a signal peptide; sequence MLKKLKVVRLLVNHLIYCPSIFMPYSKNMKKKIWNKTSLGALFMLFGTALTA.

Belongs to the MG439/MG440 family.

This is an uncharacterized protein from Mycoplasma pneumoniae (strain ATCC 29342 / M129 / Subtype 1) (Mycoplasmoides pneumoniae).